The sequence spans 586 residues: Putative Lon protease homolog (586 aa).

A Lon proteolytic domain is found at 346-543 (GERIGQINAL…TDALPLLLNL (198 aa)). Catalysis depends on residues Ser438 and Lys481.

Belongs to the peptidase S16 family.

The sequence is that of Putative Lon protease homolog (ycbZ) from Escherichia coli (strain K12).